A 30-amino-acid polypeptide reads, in one-letter code: Trypsin inhibitor 1 (30 aa).

Intrachain disulfides connect Cys4/Cys21, Cys11/Cys23, and Cys17/Cys29.

This sequence belongs to the protease inhibitor I7 (squash-type serine protease inhibitor) family.

It localises to the secreted. In terms of biological role, inhibits trypsin. The sequence is that of Trypsin inhibitor 1 from Citrullus lanatus (Watermelon).